The sequence spans 720 residues: Methionine--tRNA ligase (720 aa).

The 'HIGH' region signature appears at Pro-27 to His-37. Zn(2+) contacts are provided by Cys-158, Cys-161, Cys-171, and Cys-174. A 'KMSKS' region motif is present at residues Lys-348–Ser-352. An ATP-binding site is contributed by Lys-351. The tRNA-binding domain occupies Asp-614–Lys-720.

Belongs to the class-I aminoacyl-tRNA synthetase family. MetG type 1 subfamily. As to quaternary structure, homodimer. Zn(2+) is required as a cofactor.

It is found in the cytoplasm. It catalyses the reaction tRNA(Met) + L-methionine + ATP = L-methionyl-tRNA(Met) + AMP + diphosphate. Is required not only for elongation of protein synthesis but also for the initiation of all mRNA translation through initiator tRNA(fMet) aminoacylation. The sequence is that of Methionine--tRNA ligase from Burkholderia ambifaria (strain MC40-6).